Consider the following 61-residue polypeptide: Metallothionein-2 (61 aa).

Met1 is subject to N-acetylmethionine. The beta stretch occupies residues 1–29; the sequence is MDPNCSCATDGSCSCAGSCKCKECKCTTC. 18 residues coordinate a divalent metal cation: Cys5, Cys7, Cys13, Cys15, Cys19, Cys21, Cys24, Cys26, Cys29, Cys33, Cys34, Cys36, Cys37, Cys41, Cys44, Cys48, Cys50, and Cys57. Residues 30-61 form an alpha region; that stretch reads KKSCCSCCPVGCAKCSQGCVCKEASDKCSCCA. The residue at position 58 (Ser58) is a Phosphoserine. Residues Cys59 and Cys60 each contribute to the a divalent metal cation site.

Belongs to the metallothionein superfamily. Type 1 family.

Metallothioneins have a high content of cysteine residues that bind various heavy metals; these proteins are transcriptionally regulated by both heavy metals and glucocorticoids. This is Metallothionein-2 (MT2) from Cricetulus griseus (Chinese hamster).